The primary structure comprises 103 residues: Large ribosomal subunit protein bL21 (103 aa).

Belongs to the bacterial ribosomal protein bL21 family. In terms of assembly, part of the 50S ribosomal subunit. Contacts protein L20.

This protein binds to 23S rRNA in the presence of protein L20. The chain is Large ribosomal subunit protein bL21 from Mannheimia succiniciproducens (strain KCTC 0769BP / MBEL55E).